A 235-amino-acid chain; its full sequence is Segregation and condensation protein A (235 aa).

It belongs to the ScpA family. As to quaternary structure, component of a cohesin-like complex composed of ScpA, ScpB and the Smc homodimer, in which ScpA and ScpB bind to the head domain of Smc. The presence of the three proteins is required for the association of the complex with DNA.

It is found in the cytoplasm. Participates in chromosomal partition during cell division. May act via the formation of a condensin-like complex containing Smc and ScpB that pull DNA away from mid-cell into both cell halves. This chain is Segregation and condensation protein A, found in Streptococcus uberis (strain ATCC BAA-854 / 0140J).